The following is a 422-amino-acid chain: DNA-binding transcriptional activator AdeR (422 aa).

The protein belongs to the CdaR family.

Its function is as follows. Activates ald expression in response to alanine availability and is important for normal sporulation in B.subtilis. The polypeptide is DNA-binding transcriptional activator AdeR (Bacillus subtilis (strain 168)).